A 1169-amino-acid chain; its full sequence is MRRLSAILPILLLSNFWPTVESLNYKCHNDQILVVQSFGNDTIRMHCQRLDLCGYQKLKCDYDELQPQCGGKLNFVSHVNQKGSTAPVEHTCCNLFNPRSHHSIPTHIGNDCFIYELPDGSSNGKKVDPAPADDAPYAVLKNPAEIPEQFDGVTGYRLRLFLLKNKSPPTLLVKGIERRLDGYRVTICRPRCTSYDKVVNDNEGAEDGEWKAISWSSWSSSSWSTWARHAFNKAAAEGGEAAERIRTRMPIGEKTVAGAAGATGAAGSDKSNINIHVESNGNNNNSFEGGRSSSEKSDGQLNREISGSSEAGAGGKGGAGADGAAGSGAGAGAGAGTNGNINITVHTDGKSGGNAVAVANANVTVNGAGGVSTTGTGAQTGNESGLGGSAGTDKAGGKKGGHGDSGDSGNNKNKDNGKGKGKGKNDEEDEEDNGDEDGNGKGGNGGNPKGEWDDGDGDEDDDGTDGGSKESGNNGKGKGKGSGDGDGNRNGNGDGNGRPKGDGNIKINIHSPDDNDLLEKDENGPNGKGGAGNGNGDGDKDNNGKGNGTGDGDGDGNGNGNGLTGDGNGTGDGDNNESGNGNGDGSDKNSGAGAGTKPENREGGDGNGNGTGDGNGDGNDNGNGSKGLGTGSGDGKGEGNKSGTPGKSDGKEDGAGSNGSGNGKEGDGNKSGGSGKGGAGNGKSGDGSGDGKNNGNGGTGDGKDKNGKGSGSGDNDKSGTRAAGKGNAEGNGKGNGNDGKGSGSGDGSGAGGKGDKSDSESGNEADGKDGKKNEGAGGEAAAGSGGANKGGSDGDDDDVDVTDVEVGTKPLTGTKLEELLAKLPNETADGNATGDGNEFGTVQTGAKHNAESSASGIPLVQARSNTVNGGAPVPPAPGSGATGSGTSGSGTSESVTNGSGATESGSTGSGTTGTGTSGTGSSGTGASAARTSSIAGDAPQAAVLADTPGAAGAAGGGRSNCFSADSLVTTVTGQKRMDELQIGDYVLVPSSGNVLKYEKVEMFYHREPKTRTNFVVLYTKSGRKLSLTGRHLLPVAECSQVEQYTMNPDGIDVAMRESKYAEKARKGECVLSIDESGEVIADEIVRVGRMTNVGIYSPMTVEGSLIVDGVLSSCFSHLESHSAHKLIFDFIYYVYNAFGLLNTNHVDLQPIPTFVSFAQYLSKTVLPFS.

An N-terminal signal peptide occupies residues Met-1–Ser-22. Disordered regions lie at residues Gly-261 to Asn-338 and Ala-368 to Ser-933. Residues Glu-278 to Ser-292 are compositionally biased toward low complexity. The segment covering Gly-312 to Thr-337 has biased composition (gly residues). 2 stretches are compositionally biased toward acidic residues: residues Asp-426–Asp-437 and Asp-453–Thr-464. Over residues Ser-511–Asn-523 the composition is skewed to basic and acidic residues. 5 stretches are compositionally biased toward gly residues: residues Asn-526 to Gly-536, Lys-545 to Asp-572, Asp-605 to Asp-634, Gly-656 to Gly-700, and Asn-727 to Gly-752. Residues Lys-753–Glu-774 show a composition bias toward basic and acidic residues. Gly residues predominate over residues Gly-775–Gly-791. The segment covering Asp-793–Asp-803 has biased composition (acidic residues). Over residues Gly-840 to Ser-855 the composition is skewed to polar residues. Residues Ser-889–Ser-906 show a composition bias toward low complexity. The segment covering Thr-907–Gly-923 has biased composition (gly residues). Over residues Thr-924 to Ser-933 the composition is skewed to low complexity.

Transiently expressed in head cells.

The protein resides in the cytoplasmic vesicle. It localises to the secreted. It is found in the extracellular space. Its subcellular location is the extracellular matrix. Required for cuticle shedding and normal alae morphology and localization, and subsequently larval development. The sequence is that of Protein qua-1 from Caenorhabditis elegans.